We begin with the raw amino-acid sequence, 117 residues long: Immunoglobulin kappa variable 1-9 (117 aa).

The signal sequence occupies residues M1–C22. Residues D23–C45 form a framework-1 region. The 94-residue stretch at I24–P117 folds into the Ig-like domain. A disulfide bond links C45 and C110. Residues R46–A56 are complementarity-determining-1. The tract at residues W57–Y71 is framework-2. Residues A72 to S78 are complementarity-determining-2. The interval G79–C110 is framework-3. Residues Q111–P117 form a complementarity-determining-3 region.

In terms of assembly, immunoglobulins are composed of two identical heavy chains and two identical light chains; disulfide-linked.

It localises to the secreted. The protein resides in the cell membrane. In terms of biological role, v region of the variable domain of immunoglobulin light chains that participates in the antigen recognition. Immunoglobulins, also known as antibodies, are membrane-bound or secreted glycoproteins produced by B lymphocytes. In the recognition phase of humoral immunity, the membrane-bound immunoglobulins serve as receptors which, upon binding of a specific antigen, trigger the clonal expansion and differentiation of B lymphocytes into immunoglobulins-secreting plasma cells. Secreted immunoglobulins mediate the effector phase of humoral immunity, which results in the elimination of bound antigens. The antigen binding site is formed by the variable domain of one heavy chain, together with that of its associated light chain. Thus, each immunoglobulin has two antigen binding sites with remarkable affinity for a particular antigen. The variable domains are assembled by a process called V-(D)-J rearrangement and can then be subjected to somatic hypermutations which, after exposure to antigen and selection, allow affinity maturation for a particular antigen. The protein is Immunoglobulin kappa variable 1-9 of Homo sapiens (Human).